Consider the following 523-residue polypeptide: Leghemoglobin reductase (523 aa).

A mitochondrion-targeting transit peptide spans 1-30 (MAMASLARRKAYAVVSSSRSSVFLTSLRGF). Residues 66–75 (EKRGTLGGTC), K84, G148, and 177–179 (TGS) each bind FAD. C75 and C80 are joined by a disulfide. Residues 214–221 (GAGYIGLE), E237, V271, and G306 each bind NAD(+). FAD is bound by residues D347 and 353–356 (MLAH). H479 (proton acceptor) is an active-site residue.

The protein belongs to the class-I pyridine nucleotide-disulfide oxidoreductase family. Homodimer. Requires FAD as cofactor.

It is found in the mitochondrion. The catalysed reaction is 2 Fe(III)-[leghemoglobin] + NADH = 2 Fe(II)-[leghemoglobin] + NAD(+) + H(+). It carries out the reaction 2 Fe(III)-[leghemoglobin] + NADPH = 2 Fe(II)-[leghemoglobin] + NADP(+) + H(+). Functionally, reduces ferric leghemoglobin (Lb) to ferrous Lb. This chain is Leghemoglobin reductase (FLBR), found in Vigna unguiculata (Cowpea).